Here is a 376-residue protein sequence, read N- to C-terminus: Carbamoyl phosphate synthase small chain (376 aa).

Residues 1 to 187 (MRAFLALEDG…AADGAYAWPG (187 aa)) form a CPSase region. L-glutamine is bound by residues Ser-45, Gly-239, and Gly-241. A Glutamine amidotransferase type-1 domain is found at 191 to 376 (RLVVYDYGIK…RGMVREAVGR (186 aa)). Residue Cys-266 is the Nucleophile of the active site. The L-glutamine site is built by Leu-267, Gln-270, Asn-308, Gly-310, and Phe-311. Active-site residues include His-349 and Glu-351.

The protein belongs to the CarA family. As to quaternary structure, composed of two chains; the small (or glutamine) chain promotes the hydrolysis of glutamine to ammonia, which is used by the large (or ammonia) chain to synthesize carbamoyl phosphate. Tetramer of heterodimers (alpha,beta)4.

The catalysed reaction is hydrogencarbonate + L-glutamine + 2 ATP + H2O = carbamoyl phosphate + L-glutamate + 2 ADP + phosphate + 2 H(+). It carries out the reaction L-glutamine + H2O = L-glutamate + NH4(+). The protein operates within amino-acid biosynthesis; L-arginine biosynthesis; carbamoyl phosphate from bicarbonate: step 1/1. It functions in the pathway pyrimidine metabolism; UMP biosynthesis via de novo pathway; (S)-dihydroorotate from bicarbonate: step 1/3. Small subunit of the glutamine-dependent carbamoyl phosphate synthetase (CPSase). CPSase catalyzes the formation of carbamoyl phosphate from the ammonia moiety of glutamine, carbonate, and phosphate donated by ATP, constituting the first step of 2 biosynthetic pathways, one leading to arginine and/or urea and the other to pyrimidine nucleotides. The small subunit (glutamine amidotransferase) binds and cleaves glutamine to supply the large subunit with the substrate ammonia. This Nitratidesulfovibrio vulgaris (strain DSM 19637 / Miyazaki F) (Desulfovibrio vulgaris) protein is Carbamoyl phosphate synthase small chain.